Here is a 263-residue protein sequence, read N- to C-terminus: Palmitoyltransferase ZDHHC22 (263 aa).

Over 1-9 the chain is Cytoplasmic; that stretch reads MLALRLLNV. Residues 10–30 form a helical membrane-spanning segment; that stretch reads VAPAYFLCISLVTFVLQLFLF. Over 31 to 48 the chain is Lumenal; sequence LPSMREDPAAARLFSPAL. Residues 49-69 form a helical membrane-spanning segment; sequence LHGALFLFLSANALGNYVLVI. Residues 70 to 125 are Cytoplasmic-facing; that stretch reads QNSPDDLGACQGASARKTPCPSPSTHFCRVCARVTLRHDHHCFFTGNCIGSRNMRN. The 40-residue stretch at 92 to 131 folds into the DHHC domain; the sequence is PSTHFCRVCARVTLRHDHHCFFTGNCIGSRNMRNFVLFCL. Residue Cys111 is the S-palmitoyl cysteine intermediate of the active site. The next 2 helical transmembrane spans lie at 126-146 and 147-167; these read FVLF…AGVA and YISA…TLLP. Residues 168–182 lie on the Cytoplasmic side of the membrane; the sequence is TSISQFFSGAVLGSE. A helical transmembrane segment spans residues 183–203; that stretch reads MFVILMLYLWFAIGLACAGFC. The Lumenal segment spans residues 204-263; that stretch reads CHQLLLILRGQTRHQVRKGVAVRARPWRKNLQEVFGKRWLLGLLVPMFNVGSESSKQQDK.

This sequence belongs to the DHHC palmitoyltransferase family. Interacts with CNN3. As to expression, widely expressed.

Its subcellular location is the endoplasmic reticulum membrane. The protein localises to the golgi apparatus membrane. The enzyme catalyses L-cysteinyl-[protein] + hexadecanoyl-CoA = S-hexadecanoyl-L-cysteinyl-[protein] + CoA. Its function is as follows. Palmitoyltransferase that could catalyze the addition of palmitate onto various protein substrates and be involved in a variety of cellular processes. Catalyzes the palmitoylation of KCNMA1, regulating localization of KCNMA1 to the plasma membrane. Might also mediate palmitoylation of CNN3. This chain is Palmitoyltransferase ZDHHC22, found in Homo sapiens (Human).